Reading from the N-terminus, the 195-residue chain is MKIGVLALQGAFREHLNMLGTLGAEAVEVRKAEELPELSGLIIPGGESTTITKLLDIFGMAEPIKALAKKGMPIWGTCAGMICLAKELPGDISGVKPLGLMDITVRRNAFGRQVNSFEAMLKVKGLDKADFPAVFIRAPLVEKTGKGVEILSKLPDGTIVAVRENNLLAISFHPELSGDNRFHRYFVQMAKTYKA.

46-48 (GES) is an L-glutamine binding site. Residue Cys78 is the Nucleophile of the active site. L-glutamine is bound by residues Arg107 and 136-137 (IR). Residues His173 and Glu175 each act as charge relay system in the active site.

The protein belongs to the glutaminase PdxT/SNO family. As to quaternary structure, in the presence of PdxS, forms a dodecamer of heterodimers. Only shows activity in the heterodimer.

It catalyses the reaction aldehydo-D-ribose 5-phosphate + D-glyceraldehyde 3-phosphate + L-glutamine = pyridoxal 5'-phosphate + L-glutamate + phosphate + 3 H2O + H(+). The enzyme catalyses L-glutamine + H2O = L-glutamate + NH4(+). Its pathway is cofactor biosynthesis; pyridoxal 5'-phosphate biosynthesis. Catalyzes the hydrolysis of glutamine to glutamate and ammonia as part of the biosynthesis of pyridoxal 5'-phosphate. The resulting ammonia molecule is channeled to the active site of PdxS. This is Pyridoxal 5'-phosphate synthase subunit PdxT from Dehalococcoides mccartyi (strain ATCC BAA-2100 / JCM 16839 / KCTC 5957 / BAV1).